A 181-amino-acid polypeptide reads, in one-letter code: Major urinary protein 11 (181 aa).

The signal sequence occupies residues 1–19 (MKMLLLLLCLGLTLVCVHA). Cysteine 83 and cysteine 176 form a disulfide bridge.

This sequence belongs to the calycin superfamily. Lipocalin family.

It localises to the secreted. Its function is as follows. Major urinary proteins (Mups) bind pheromones, and thus stabilize them to allow slow release into the air from urine marks. May protect pheromones from oxidation. May also act as pheromones themselves. In this context, they play a role in the regulation of social behaviors, such as aggression, mating, pup-suckling, territory establishment and dominance. Binds the pheromone analog 2-sec-butyl-4,5-dihydrothiazole (SBT) in vitro. The protein is Major urinary protein 11 of Mus musculus (Mouse).